Reading from the N-terminus, the 341-residue chain is Phosphoribosylformylglycinamidine cyclo-ligase (341 aa).

This sequence belongs to the AIR synthase family.

It is found in the cytoplasm. It carries out the reaction 2-formamido-N(1)-(5-O-phospho-beta-D-ribosyl)acetamidine + ATP = 5-amino-1-(5-phospho-beta-D-ribosyl)imidazole + ADP + phosphate + H(+). It functions in the pathway purine metabolism; IMP biosynthesis via de novo pathway; 5-amino-1-(5-phospho-D-ribosyl)imidazole from N(2)-formyl-N(1)-(5-phospho-D-ribosyl)glycinamide: step 2/2. The protein is Phosphoribosylformylglycinamidine cyclo-ligase of Alkaliphilus oremlandii (strain OhILAs) (Clostridium oremlandii (strain OhILAs)).